The chain runs to 310 residues: 4-diphosphocytidyl-2-C-methyl-D-erythritol kinase (310 aa).

Lysine 20 is an active-site residue. Position 106 to 116 (106 to 116 (PMGGGLGGGSS)) interacts with ATP. The active site involves aspartate 148.

The protein belongs to the GHMP kinase family. IspE subfamily. In terms of assembly, homodimer.

The catalysed reaction is 4-CDP-2-C-methyl-D-erythritol + ATP = 4-CDP-2-C-methyl-D-erythritol 2-phosphate + ADP + H(+). It functions in the pathway isoprenoid biosynthesis; isopentenyl diphosphate biosynthesis via DXP pathway; isopentenyl diphosphate from 1-deoxy-D-xylulose 5-phosphate: step 3/6. Functionally, catalyzes the phosphorylation of the position 2 hydroxy group of 4-diphosphocytidyl-2C-methyl-D-erythritol. This Yersinia pseudotuberculosis serotype O:3 (strain YPIII) protein is 4-diphosphocytidyl-2-C-methyl-D-erythritol kinase.